The chain runs to 374 residues: Beta sliding clamp (374 aa).

This sequence belongs to the beta sliding clamp family. As to quaternary structure, forms a ring-shaped head-to-tail homodimer around DNA which binds and tethers DNA polymerases and other proteins to the DNA. The DNA replisome complex has a single clamp-loading complex (3 tau and 1 each of delta, delta', psi and chi subunits) which binds 3 Pol III cores (1 core on the leading strand and 2 on the lagging strand) each with a beta sliding clamp dimer. Additional proteins in the replisome are other copies of gamma, psi and chi, Ssb, DNA helicase and RNA primase.

Its subcellular location is the cytoplasm. In terms of biological role, confers DNA tethering and processivity to DNA polymerases and other proteins. Acts as a clamp, forming a ring around DNA (a reaction catalyzed by the clamp-loading complex) which diffuses in an ATP-independent manner freely and bidirectionally along dsDNA. Initially characterized for its ability to contact the catalytic subunit of DNA polymerase III (Pol III), a complex, multichain enzyme responsible for most of the replicative synthesis in bacteria; Pol III exhibits 3'-5' exonuclease proofreading activity. The beta chain is required for initiation of replication as well as for processivity of DNA replication. The polypeptide is Beta sliding clamp (dnaN) (Helicobacter pylori (strain ATCC 700392 / 26695) (Campylobacter pylori)).